We begin with the raw amino-acid sequence, 231 residues long: Dihydropteridine reductase (231 aa).

6-30 (LVLGGSGALGAEVVKFFKSKSWNTI) serves as a coordination point for NADP(+). Tyr138 (proton acceptor) is an active-site residue.

This sequence belongs to the short-chain dehydrogenases/reductases (SDR) family. Homodimer.

It catalyses the reaction 5,6,7,8-tetrahydropteridine + NAD(+) = 6,7-dihydropteridine + NADH + H(+). It carries out the reaction 5,6,7,8-tetrahydropteridine + NADP(+) = 6,7-dihydropteridine + NADPH + H(+). Functionally, the product of this enzyme, tetrahydrobiopterin (BH-4), is an essential cofactor for phenylalanine, tyrosine, and tryptophan hydroxylases. The chain is Dihydropteridine reductase (qdpr) from Dictyostelium discoideum (Social amoeba).